The sequence spans 274 residues: Diaminopimelate epimerase (274 aa).

Positions 11, 44, and 64 each coordinate substrate. C73 (proton donor) is an active-site residue. Substrate is bound by residues 74 to 75 (GN), N157, N190, and 208 to 209 (ER). Residue C217 is the Proton acceptor of the active site. Residue 218–219 (GS) participates in substrate binding.

It belongs to the diaminopimelate epimerase family. In terms of assembly, homodimer.

The protein resides in the cytoplasm. The catalysed reaction is (2S,6S)-2,6-diaminopimelate = meso-2,6-diaminopimelate. It participates in amino-acid biosynthesis; L-lysine biosynthesis via DAP pathway; DL-2,6-diaminopimelate from LL-2,6-diaminopimelate: step 1/1. Its function is as follows. Catalyzes the stereoinversion of LL-2,6-diaminopimelate (L,L-DAP) to meso-diaminopimelate (meso-DAP), a precursor of L-lysine and an essential component of the bacterial peptidoglycan. This Haemophilus influenzae (strain PittEE) protein is Diaminopimelate epimerase.